We begin with the raw amino-acid sequence, 113 residues long: Transmembrane protein 256 (113 aa).

The first 29 residues, 1 to 29 (MAGVGAAFRRLGALSGAGALGLASYGAHG), serve as a signal peptide directing secretion. At 30–63 (AQFPDAYGKELFDKANKHHFLHSLALLGVPSCRK) the chain is on the extracellular side. An N6-acetyllysine modification is found at Lys-43. A helical transmembrane segment spans residues 64 to 84 (PVWAGLLLASGTTLFCTSFYY). At 85–92 (QALSGDTS) the chain is on the cytoplasmic side. Residues 93 to 113 (IQTLGPVGGSLLILGWLALAF) traverse the membrane as a helical segment.

The protein belongs to the TMEM256 family.

It localises to the membrane. The protein is Transmembrane protein 256 (Tmem256) of Mus musculus (Mouse).